Here is a 343-residue protein sequence, read N- to C-terminus: Mesaconyl-CoA hydratase (343 aa).

Positions 47 to 116 (SDEFARACGL…STVIGLKENS (70 aa)) constitute a MaoC-like domain. Substrate contacts are provided by residues 60 to 63 (PVDE), 83 to 86 (VANL), and 94 to 96 (LKP).

It carries out the reaction (2R,3S)-beta-methylmalyl-CoA = 2-methylfumaryl-CoA + H2O. Its function is as follows. Involved in the ethylmalonyl-CoA pathway for acetate assimilation. Catalyzes the reversible hydration of mesaconyl-CoA (2-methylfumaryl-CoA) to yield beta-methylmalyl-CoA ((2R,3S)-beta-methylmalyl-CoA). This chain is Mesaconyl-CoA hydratase (mch), found in Cereibacter sphaeroides (strain ATCC 17023 / DSM 158 / JCM 6121 / CCUG 31486 / LMG 2827 / NBRC 12203 / NCIMB 8253 / ATH 2.4.1.) (Rhodobacter sphaeroides).